The following is a 793-amino-acid chain: Calcium permeable stress-gated cation channel 1 (793 aa).

At 1 to 21 (MAFNGYGIFDSDPRKNPSSDL) the chain is on the lumenal side. A helical membrane pass occupies residues 22–42 (RTQFWLAFLLGASACVFFCFF). The Cytoplasmic portion of the chain corresponds to 43–95 (RKRWKVLYAPRTTIEGLNLPTLSSSYYKWLMDLVNIPDDVVQNCAGLDGYVFL). The chain crosses the membrane as a helical span at residues 96 to 116 (LFFKMGIKFLSFASLLGVLII). At 117–192 (MPVNKHFRGD…IPGLPQPGDG (76 aa)) the chain is on the lumenal side. The chain crosses the membrane as a helical span at residues 193–213 (FLYLYVLFTYFISIFLLYVLF). Over 214–444 (SSTKSIADIR…HKFFQGWFIT (231 aa)) the chain is Cytoplasmic. A helical transmembrane segment spans residues 445–465 (LVTFMIILLWTVPVGAIAVFI). Residues 466–493 (NLDTIRRLWPELGRMIEDLPFLNSLLRT) lie on the Lumenal side of the membrane. Residues 494–514 (FLPTLVYSLFISISPFLFRWL) traverse the membrane as a helical segment. The Cytoplasmic segment spans residues 515 to 534 (SSMQGLSSRAEEEIYAVGKN). The helical transmembrane segment at 535–555 (YAYLFVNFFLVYVIAGSTSIW) threads the bilayer. Over 556–577 (ELAKDTTSFAHFLANRLPHQAQ) the chain is Lumenal. A helical membrane pass occupies residues 578-598 (FFIDLIVLQGIGMFPLKLIQL). At 599–646 (GKLSSYFVRRSFVPYSIASKKFETPDSFSVGIFLPQPMFIMLICLCYS) the chain is on the cytoplasmic side. The chain crosses the membrane as a helical span at residues 647-667 (IISPLILVFGLIYFIIGFLVY). Over 668–687 (KYELIYQMEHPQHSTGELWS) the chain is Lumenal. The helical transmembrane segment at 688-708 (TIFLRMIFGCVIMQLTMMGLM) threads the bilayer. At 709–713 (SLRKA) the chain is on the cytoplasmic side. The helical transmembrane segment at 714 to 734 (YWLSTVIFPLLCFTVISAYNF) threads the bilayer. Topologically, residues 735-793 (STMIRSSMQFVSLYYIRTHQSNTLSSESESRNSESSGSYVHPGFDLSNEELPLIDLNTA) are lumenal. The interval 759-778 (SSESESRNSESSGSYVHPGF) is disordered.

The protein belongs to the CSC1 (TC 1.A.17) family.

It is found in the vacuole membrane. Acts as an osmosensitive calcium-permeable cation channel. In Schizosaccharomyces pombe (strain 972 / ATCC 24843) (Fission yeast), this protein is Calcium permeable stress-gated cation channel 1.